The following is a 924-amino-acid chain: Motility hub protein FimV (924 aa).

The signal sequence occupies residues 1–24 (MVRLRTLVRAIAAASVLTSGMAHG). The span at 140–150 (ASAPQAPVSAP) shows a compositional bias: low complexity. Disordered regions lie at residues 140-176 (ASAP…SDTY), 237-312 (ERSP…KGDS), and 372-445 (GQGA…PAPV). Positions 174 to 229 (DTYRTVSNDTLWEIAQRNRTDRVSVPQAMLAFQELNPGAFVDGNINRLKSGQVLRI) constitute a LysM domain. Polar residues predominate over residues 245–256 (SQVQAQNQSWRG). The segment covering 299 to 312 (KASKGADKGGKGDS) has biased composition (basic and acidic residues). Positions 390–417 (AAAQAPAQPGTPAAAAPTPAPAGEAPAA) are enriched in low complexity. The span at 418–443 (PAQPPVAPPPAPVAEKPPAPAVPAPA) shows a compositional bias: pro residues. Residues 464–484 (LWLAVIGGSALLALLVLLMIL) traverse the membrane as a helical segment. The tract at residues 799–858 (DDFDLSLADEPTEPAAPEKGEDSFAAQLDEVSAQLDELASNLDEPKSAAPSFSAEDAAVA) is disordered.

As to quaternary structure, interacts with FimL. Interacts with DgcP.

Its subcellular location is the cell inner membrane. Inner membrane hub protein that plays both cAMP-dependent and cAMP-independent roles in twitching motility. Regulates intracellular cyclic AMP (cAMP) levels through the activation of adenylate cyclase CyaB. Plays an essential role in a number of virulence mechanisms including type IV pilus (T4P)-mediated assembly and twitching motility as well as cAMP-dependent virulence gene expression. Also mediates type II secretion (T2S) of lipases and proteases. In addition, mediates the cAMP-independent localization of multiple T4P structural and regulatory components to the cell poles. This role in directing proteins to the cell pole is not restricted to type IV component and involves other proteins such as the diguanylate cyclase DgcP. In Pseudomonas aeruginosa (strain UCBPP-PA14), this protein is Motility hub protein FimV (fimV).